Reading from the N-terminus, the 362-residue chain is UDP-N-acetylglucosamine--N-acetylmuramyl-(pentapeptide) pyrophosphoryl-undecaprenol N-acetylglucosamine transferase (362 aa).

UDP-N-acetyl-alpha-D-glucosamine contacts are provided by residues 15–17 (TGG), N127, R165, S191, I247, 266–271 (ALTVSE), and Q292.

The protein belongs to the glycosyltransferase 28 family. MurG subfamily.

It localises to the cell inner membrane. It catalyses the reaction di-trans,octa-cis-undecaprenyl diphospho-N-acetyl-alpha-D-muramoyl-L-alanyl-D-glutamyl-meso-2,6-diaminopimeloyl-D-alanyl-D-alanine + UDP-N-acetyl-alpha-D-glucosamine = di-trans,octa-cis-undecaprenyl diphospho-[N-acetyl-alpha-D-glucosaminyl-(1-&gt;4)]-N-acetyl-alpha-D-muramoyl-L-alanyl-D-glutamyl-meso-2,6-diaminopimeloyl-D-alanyl-D-alanine + UDP + H(+). It participates in cell wall biogenesis; peptidoglycan biosynthesis. Its function is as follows. Cell wall formation. Catalyzes the transfer of a GlcNAc subunit on undecaprenyl-pyrophosphoryl-MurNAc-pentapeptide (lipid intermediate I) to form undecaprenyl-pyrophosphoryl-MurNAc-(pentapeptide)GlcNAc (lipid intermediate II). The protein is UDP-N-acetylglucosamine--N-acetylmuramyl-(pentapeptide) pyrophosphoryl-undecaprenol N-acetylglucosamine transferase of Shewanella sp. (strain ANA-3).